Consider the following 369-residue polypeptide: 5-amino-6-(D-ribitylamino)uracil--L-tyrosine 4-hydroxyphenyl transferase (369 aa).

Positions 56–292 (VTFVVNRNIN…AVARLYFGPL (237 aa)) constitute a Radical SAM core domain. Positions 70, 74, and 77 each coordinate [4Fe-4S] cluster.

It belongs to the radical SAM superfamily. CofH family. Consists of two subunits, CofG and CofH. It depends on [4Fe-4S] cluster as a cofactor.

It carries out the reaction 5-amino-6-(D-ribitylamino)uracil + L-tyrosine + S-adenosyl-L-methionine = 5-amino-5-(4-hydroxybenzyl)-6-(D-ribitylimino)-5,6-dihydrouracil + 2-iminoacetate + 5'-deoxyadenosine + L-methionine + H(+). The protein operates within cofactor biosynthesis; coenzyme F0 biosynthesis. In terms of biological role, catalyzes the radical-mediated synthesis of 5-amino-5-(4-hydroxybenzyl)-6-(D-ribitylimino)-5,6-dihydrouracil from 5-amino-6-(D-ribitylamino)uracil and L-tyrosine. The sequence is that of 5-amino-6-(D-ribitylamino)uracil--L-tyrosine 4-hydroxyphenyl transferase from Methanopyrus kandleri (strain AV19 / DSM 6324 / JCM 9639 / NBRC 100938).